A 142-amino-acid chain; its full sequence is ATP synthase epsilon chain (142 aa).

It belongs to the ATPase epsilon chain family. As to quaternary structure, F-type ATPases have 2 components, CF(1) - the catalytic core - and CF(0) - the membrane proton channel. CF(1) has five subunits: alpha(3), beta(3), gamma(1), delta(1), epsilon(1). CF(0) has three main subunits: a, b and c.

The protein resides in the cell inner membrane. Produces ATP from ADP in the presence of a proton gradient across the membrane. The sequence is that of ATP synthase epsilon chain from Shewanella loihica (strain ATCC BAA-1088 / PV-4).